A 464-amino-acid chain; its full sequence is Citrate synthase, mitochondrial (464 aa).

The N-terminal 27 residues, Met1 to Ser27, are a transit peptide targeting the mitochondrion. The SIFI-degron signature appears at Ala2 to Leu21. Lys76 carries the post-translational modification N6-acetyllysine; alternate. At Lys76 the chain carries N6-succinyllysine; alternate. N6-succinyllysine occurs at positions 103 and 193. Residue Ser226 is modified to Phosphoserine. His301 is a catalytic residue. 2 positions are modified to N6-acetyllysine; alternate: Lys321 and Lys327. N6-succinyllysine; alternate occurs at positions 321 and 327. His347 is a catalytic residue. Position 356 (Arg356) interacts with oxaloacetate. N6-acetyllysine; alternate is present on Lys375. Lys375 carries the N6-succinyllysine; alternate modification. Lys382 is subject to N6-acetyllysine. Lys393 carries the post-translational modification N6-acetyllysine; alternate. Position 393 is an N6-succinyllysine; alternate (Lys393). Residue Lys395 is modified to N6,N6,N6-trimethyllysine. Asp402 is an active-site residue. Oxaloacetate-binding residues include Arg428 and Arg448. Lys450 carries the N6-succinyllysine modification. Lys459 carries the post-translational modification N6-acetyllysine; alternate. Lys459 bears the N6-succinyllysine; alternate mark.

The protein belongs to the citrate synthase family. Homodimer. In terms of processing, methylated. Trimethylation at Lys-395 by CSKMT decreases citrate synthase activity. In response to mitochondrial stress, the precursor protein is ubiquitinated by the SIFI complex in the cytoplasm before mitochondrial import, leading to its degradation. Within the SIFI complex, UBR4 initiates ubiquitin chain that are further elongated or branched by KCMF1.

It localises to the mitochondrion matrix. It catalyses the reaction oxaloacetate + acetyl-CoA + H2O = citrate + CoA + H(+). Its pathway is carbohydrate metabolism; tricarboxylic acid cycle; isocitrate from oxaloacetate: step 1/2. Functionally, key enzyme of the Krebs tricarboxylic acid cycle which catalyzes the synthesis of citrate from acetyl coenzyme A and oxaloacetate. This chain is Citrate synthase, mitochondrial (CS), found in Sus scrofa (Pig).